Reading from the N-terminus, the 177-residue chain is Large ribosomal subunit protein uL6 (177 aa).

The disordered stretch occupies residues 151–177 (LRPPEPYKGKGVRYAGENVRRKEGKKK).

It belongs to the universal ribosomal protein uL6 family. Part of the 50S ribosomal subunit.

Its function is as follows. This protein binds to the 23S rRNA, and is important in its secondary structure. It is located near the subunit interface in the base of the L7/L12 stalk, and near the tRNA binding site of the peptidyltransferase center. This chain is Large ribosomal subunit protein uL6, found in Phenylobacterium zucineum (strain HLK1).